We begin with the raw amino-acid sequence, 265 residues long: Type 1 encapsulin shell protein (265 aa).

This sequence belongs to the encapsulin family. Family 1 subfamily. As to quaternary structure, found in a complex with DyP, suggesting it is the native cargo protein. Monomers form pentamers, which assemble to form hollow shells composed of 60 subunits with several openings.

Its subcellular location is the encapsulin nanocompartment. It is found in the cell membrane. Shell component of a type 1 encapsulin nanocompartment. Assembles into proteinaceous shells 23-24 nm in diameter with 2-2.5 nm thick walls. Cargo protein DyP is targeted to the interior via its C-terminal extension; probably only 1 DyP hexamer is incorporated into each shell. Probably involved in protection against oxidative damage. The chain is Type 1 encapsulin shell protein from Mycolicibacterium paratuberculosis (strain ATCC BAA-968 / K-10) (Mycobacterium paratuberculosis).